Consider the following 592-residue polypeptide: Signal peptide peptidase-like 2B (592 aa).

The N-terminal stretch at 1–25 (MAAAVAAALARLLAAFLLLAAQVAC) is a signal peptide. The Lumenal portion of the chain corresponds to 26-174 (EYGMVHVVSQ…APKEPVLDYN (149 aa)). Residues 71 to 149 (TASLLCSAAD…VALLSYKDML (79 aa)) enclose the PA domain. N-linked (GlcNAc...) asparagine glycosylation is found at Asn-97 and Asn-129. Residues 175 to 195 (MVIIFIMAVGTVAIGGYWAGS) form a helical membrane-spanning segment. Residues 196 to 221 (RDVKKRYMKHKRDDGPEKQEDEAVDV) lie on the Cytoplasmic side of the membrane. A helical membrane pass occupies residues 222–244 (TPVMTCVFVVMCCSMLVLLYYFY). The Lumenal segment spans residues 245 to 248 (DLLV). The helical transmembrane segment at 249–271 (YVVIGIFCLASATGLYSCLAPCV) threads the bilayer. Over 272 to 293 (RRLPFGKCRIPNNSLPYFHKRP) the chain is Cytoplasmic. The chain crosses the membrane as a helical span at residues 294-314 (QARMLLLALFCVAVSVVWGVF). The Lumenal portion of the chain corresponds to 315–319 (RNEDQ). A helical transmembrane segment spans residues 320-340 (WAWVLQDALGIAFCLYMLKTI). The Cytoplasmic segment spans residues 341–348 (RLPTFKAC). A helical membrane pass occupies residues 349–369 (TLLLLVLFLYDIFFVFITPFL). Asp-359 is an active-site residue. The Lumenal portion of the chain corresponds to 370 to 412 (TKSGSSIMVEVATGPSDSATREKLPMVLKVPRLNSSPLALCDR). Residues 413–433 (PFSLLGFGDILVPGLLVAYCH) traverse the membrane as a helical segment. Asp-421 is a catalytic residue. The Cytoplasmic segment spans residues 434 to 445 (RFDIQVQSSRVY). The chain crosses the membrane as a helical span at residues 446-466 (FVACTIAYGVGLLVTFVALAL). Residues 467–470 (MQRG) lie on the Lumenal side of the membrane. Residues 471–491 (QPALLYLVPCTLVTSCAVALW) traverse the membrane as a helical segment. The short motif at 472 to 474 (PAL) is the PAL element. Residues 492-592 (RRELGVFWTG…SPVTQPGASA (101 aa)) lie on the Cytoplasmic side of the membrane. The span at 512–524 (PWAPAPADGPQPP) shows a compositional bias: pro residues. The disordered stretch occupies residues 512–592 (PWAPAPADGP…SPVTQPGASA (81 aa)). A compositionally biased stretch (polar residues) spans 580 to 592 (AQPSPVTQPGASA).

Belongs to the peptidase A22B family. In terms of assembly, monomer. Homodimer. Interacts with ITM2B. Interacts with TNF. Interacts with the simian foamy virus envelope glycoprotein gp130 and its processed leader peptide gp18LP; preferentially interacts with the leader peptide gp18LP. In terms of processing, glycosylated. Expressed predominantly in adrenal cortex and mammary gland.

Its subcellular location is the cell membrane. It localises to the golgi apparatus membrane. It is found in the lysosome membrane. The protein resides in the endosome membrane. The protein localises to the membrane. Its function is as follows. Intramembrane-cleaving aspartic protease (I-CLiP) that cleaves type II membrane signal peptides in the hydrophobic plane of the membrane. Functions in ITM2B and TNF processing. Catalyzes the intramembrane cleavage of the anchored fragment of shed TNF-alpha (TNF), which promotes the release of the intracellular domain (ICD) for signaling to the nucleus. May play a role in the regulation of innate and adaptive immunity. Catalyzes the intramembrane cleavage of the simian foamy virus processed leader peptide gp18 of the envelope glycoprotein gp130 dependently of prior ectodomain shedding by furin or furin-like proprotein convertase (PC)-mediated cleavage proteolysis. In Homo sapiens (Human), this protein is Signal peptide peptidase-like 2B.